A 706-amino-acid chain; its full sequence is Maternal embryonic leucine zipper kinase (706 aa).

One can recognise a Protein kinase domain in the interval 11 to 265; it reads YAVHDELGSG…VKKLLEHDWL (255 aa). ATP contacts are provided by residues 17–25 and Lys-40; that span reads LGSGGFGKV. Residue Asp-132 is the Proton acceptor of the active site. 3 disordered regions span residues 366–386, 433–493, and 506–555; these read LDKSGLEDDDSDPSSISSSSD, FTGR…SRGP, and SVYT…IGSA. 2 stretches are compositionally biased toward polar residues: residues 447 to 461 and 506 to 515; these read SVRSSDSASLGSAAT and SVYTTPNTRP. Residues 656-705 form the KA1 domain; sequence QETVHGWMTVELEIVRLQMFDKVGIRRKRLKGDAFMYKKVCEKILQMAKI.

It belongs to the protein kinase superfamily. CAMK Ser/Thr protein kinase family. SNF1 subfamily. In terms of processing, may be phosphorylated at Thr-169 by par-4 and/or autophosphorylated which likely results in its activation. Phosphorylation is not required for co-localization with the centrosome.

Its subcellular location is the cytoplasm. It is found in the cytoskeleton. The protein localises to the microtubule organizing center. The protein resides in the centrosome. The catalysed reaction is L-seryl-[protein] + ATP = O-phospho-L-seryl-[protein] + ADP + H(+). It carries out the reaction L-threonyl-[protein] + ATP = O-phospho-L-threonyl-[protein] + ADP + H(+). Its function is as follows. Serine/threonine-protein kinase involved in cell autonomous neuroblast asymmetric divisions that generate one precursor cell and one apoptotic cell by controlling spindle positioning, myosin distribution and the segregation of cell fate determinants. Plays a role in neural fate specification in several dopaminergic linages, acting in concert with ham-1. Involved in phosphorylation of multiple proteins associated with key developmental processes, including the cell cycle, apoptosis, endocytosis, and asymmetric cell division. Promotes cell shedding during embryogenesis, probably through the endocytosis-mediated removal of cell adhesion molecules such as hmp-1 from the cell surface. May act downstream of par-4/strd-1/mop-25 to regulate cell shedding. This Caenorhabditis elegans protein is Maternal embryonic leucine zipper kinase.